The chain runs to 1121 residues: Linoleate 10R-lipoxygenase (1121 aa).

The segment at 1-66 is disordered; sequence MLRRFSSTFK…NEKKGNSVSP (66 aa). The segment covering 22 to 36 has biased composition (low complexity); the sequence is TASSSSAAVANTNNN. The segment covering 50–61 has biased composition (basic and acidic residues); the sequence is SSSDDDRNEKKG. Catalysis depends on histidine 253, which acts as the Proton acceptor. 5 residues coordinate Ca(2+): aspartate 254, serine 269, tyrosine 271, aspartate 273, and serine 275.

Belongs to the peroxidase family.

It carries out the reaction (9Z,12Z)-octadecadienoate + O2 = (8E,10R,12Z)-10-hydroperoxyoctadeca-8,12-dienoate. In terms of biological role, responsible for the synthesis of various fatty acid-derived oxylipins. Oxidizes linoleic acid primarily to 10R-hydroperoxy-8,12-octadecadienoic acid (10R-HPODE) and, to a lesser extent, 8R-hydroperoxylinoleic acid (8R-HPODE). Also synthesizes 10-hydroxy-octadeca-8,12-dienoic acid (10-HODE) from linoleic acid and primarily 8R-hydroxy-octadeca-9-monoenoic acid (8-HOME, also known as psiB beta) from oleic acid. 8-HOME forms part of psi factor, a mixture of oxylipins that regulates the balance between sexual and asexual spore production. Displays epoxyalcohol synthase activity. Plays a role in the synthesis of prostaglandins which may be required for pathogenicity. In Aspergillus fumigatus (strain ATCC MYA-4609 / CBS 101355 / FGSC A1100 / Af293) (Neosartorya fumigata), this protein is Linoleate 10R-lipoxygenase.